The following is a 244-amino-acid chain: 1-(5-phosphoribosyl)-5-[(5-phosphoribosylamino)methylideneamino] imidazole-4-carboxamide isomerase (244 aa).

D8 functions as the Proton acceptor in the catalytic mechanism. D129 acts as the Proton donor in catalysis.

It belongs to the HisA/HisF family.

The protein resides in the cytoplasm. The enzyme catalyses 1-(5-phospho-beta-D-ribosyl)-5-[(5-phospho-beta-D-ribosylamino)methylideneamino]imidazole-4-carboxamide = 5-[(5-phospho-1-deoxy-D-ribulos-1-ylimino)methylamino]-1-(5-phospho-beta-D-ribosyl)imidazole-4-carboxamide. It functions in the pathway amino-acid biosynthesis; L-histidine biosynthesis; L-histidine from 5-phospho-alpha-D-ribose 1-diphosphate: step 4/9. The chain is 1-(5-phosphoribosyl)-5-[(5-phosphoribosylamino)methylideneamino] imidazole-4-carboxamide isomerase from Bradyrhizobium sp. (strain ORS 278).